The sequence spans 708 residues: Elongation factor G (708 aa).

One can recognise a tr-type G domain in the interval 9-289; it reads MFTRNIGIMA…AVCAFLPSPE (281 aa). Residues 18 to 25, 86 to 90, and 140 to 143 contribute to the GTP site; these read AHIDAGKT, DTPGH, and NKMD.

Belongs to the TRAFAC class translation factor GTPase superfamily. Classic translation factor GTPase family. EF-G/EF-2 subfamily.

The protein localises to the cytoplasm. In terms of biological role, catalyzes the GTP-dependent ribosomal translocation step during translation elongation. During this step, the ribosome changes from the pre-translocational (PRE) to the post-translocational (POST) state as the newly formed A-site-bound peptidyl-tRNA and P-site-bound deacylated tRNA move to the P and E sites, respectively. Catalyzes the coordinated movement of the two tRNA molecules, the mRNA and conformational changes in the ribosome. The protein is Elongation factor G of Parabacteroides distasonis (strain ATCC 8503 / DSM 20701 / CIP 104284 / JCM 5825 / NCTC 11152).